Consider the following 729-residue polypeptide: Fatty acid oxidation complex subunit alpha (729 aa).

Residues 1 to 189 are enoyl-CoA hydratase/isomerase; it reads MLYQSETLQL…KIGLVDAVVD (189 aa). Aspartate 296 is a substrate binding site. Positions 311–729 are 3-hydroxyacyl-CoA dehydrogenase; that stretch reads AAPKLAAVLG…LLDVSTNQPA (419 aa). NAD(+) contacts are provided by residues methionine 324, aspartate 343, 400–402, lysine 407, and serine 429; that span reads VVE. Catalysis depends on histidine 450, which acts as the For 3-hydroxyacyl-CoA dehydrogenase activity. Asparagine 453 lines the NAD(+) pocket. Residues asparagine 500 and tyrosine 660 each contribute to the substrate site.

In the N-terminal section; belongs to the enoyl-CoA hydratase/isomerase family. This sequence in the C-terminal section; belongs to the 3-hydroxyacyl-CoA dehydrogenase family. In terms of assembly, heterotetramer of two alpha chains (FadB) and two beta chains (FadA).

It carries out the reaction a (3S)-3-hydroxyacyl-CoA + NAD(+) = a 3-oxoacyl-CoA + NADH + H(+). It catalyses the reaction a (3S)-3-hydroxyacyl-CoA = a (2E)-enoyl-CoA + H2O. The catalysed reaction is a 4-saturated-(3S)-3-hydroxyacyl-CoA = a (3E)-enoyl-CoA + H2O. The enzyme catalyses (3S)-3-hydroxybutanoyl-CoA = (3R)-3-hydroxybutanoyl-CoA. It carries out the reaction a (3Z)-enoyl-CoA = a 4-saturated (2E)-enoyl-CoA. It catalyses the reaction a (3E)-enoyl-CoA = a 4-saturated (2E)-enoyl-CoA. Its pathway is lipid metabolism; fatty acid beta-oxidation. Involved in the aerobic and anaerobic degradation of long-chain fatty acids via beta-oxidation cycle. Catalyzes the formation of 3-oxoacyl-CoA from enoyl-CoA via L-3-hydroxyacyl-CoA. It can also use D-3-hydroxyacyl-CoA and cis-3-enoyl-CoA as substrate. In Yersinia pestis bv. Antiqua (strain Antiqua), this protein is Fatty acid oxidation complex subunit alpha.